The following is a 161-amino-acid chain: Crossover junction endodeoxyribonuclease RuvC (161 aa).

Residues aspartate 8, glutamate 67, and aspartate 139 contribute to the active site. Positions 8, 67, and 139 each coordinate Mg(2+).

Belongs to the RuvC family. As to quaternary structure, homodimer which binds Holliday junction (HJ) DNA. The HJ becomes 2-fold symmetrical on binding to RuvC with unstacked arms; it has a different conformation from HJ DNA in complex with RuvA. In the full resolvosome a probable DNA-RuvA(4)-RuvB(12)-RuvC(2) complex forms which resolves the HJ. Mg(2+) is required as a cofactor.

The protein resides in the cytoplasm. The enzyme catalyses Endonucleolytic cleavage at a junction such as a reciprocal single-stranded crossover between two homologous DNA duplexes (Holliday junction).. Functionally, the RuvA-RuvB-RuvC complex processes Holliday junction (HJ) DNA during genetic recombination and DNA repair. Endonuclease that resolves HJ intermediates. Cleaves cruciform DNA by making single-stranded nicks across the HJ at symmetrical positions within the homologous arms, yielding a 5'-phosphate and a 3'-hydroxyl group; requires a central core of homology in the junction. The consensus cleavage sequence is 5'-(A/T)TT(C/G)-3'. Cleavage occurs on the 3'-side of the TT dinucleotide at the point of strand exchange. HJ branch migration catalyzed by RuvA-RuvB allows RuvC to scan DNA until it finds its consensus sequence, where it cleaves and resolves the cruciform DNA. The chain is Crossover junction endodeoxyribonuclease RuvC from Wigglesworthia glossinidia brevipalpis.